Consider the following 255-residue polypeptide: Hemin import ATP-binding protein HmuV (255 aa).

The ABC transporter domain occupies 2-238; it reads LRVENLHVRR…EPLKAVFGLE (237 aa). Residue 34–41 coordinates ATP; sequence GPNGAGKS.

This sequence belongs to the ABC transporter superfamily. Heme (hemin) importer (TC 3.A.1.14.5) family. The complex is composed of two ATP-binding proteins (HmuV), two transmembrane proteins (HmuU) and a solute-binding protein (HmuT).

It localises to the cell inner membrane. Functionally, part of the ABC transporter complex HmuTUV involved in hemin import. Responsible for energy coupling to the transport system. This is Hemin import ATP-binding protein HmuV from Pseudomonas fluorescens (strain ATCC BAA-477 / NRRL B-23932 / Pf-5).